The primary structure comprises 642 residues: Chaperone protein HtpG (642 aa).

The a; substrate-binding stretch occupies residues 1–348 (MSTKIEQLEF…AQDLSLNVSR (348 aa)). Residues 349–564 (EILQQDRQIR…AFSMSPALER (216 aa)) form a b region. Positions 565–642 (MYRASGQPVP…MLANRLARTV (78 aa)) are c.

This sequence belongs to the heat shock protein 90 family. As to quaternary structure, homodimer.

It is found in the cytoplasm. Molecular chaperone. Has ATPase activity. The sequence is that of Chaperone protein HtpG from Rhodococcus jostii (strain RHA1).